Reading from the N-terminus, the 491-residue chain is Leucine aminopeptidase 1 (491 aa).

2 residues coordinate Zn(2+): K252 and D257. The active site involves K264. 3 residues coordinate Zn(2+): D275, D334, and E336. R338 is a catalytic residue.

Belongs to the peptidase M17 family. It depends on Zn(2+) as a cofactor. Expressed in the buccal cavity, pharynx, anterior gut and rectum.

It catalyses the reaction Release of an N-terminal amino acid, Xaa-|-Yaa-, in which Xaa is preferably Leu, but may be other amino acids including Pro although not Arg or Lys, and Yaa may be Pro. Amino acid amides and methyl esters are also readily hydrolyzed, but rates on arylamides are exceedingly low.. Functionally, probably acts as a digestive enzyme. This is Leucine aminopeptidase 1 (lap-1) from Caenorhabditis elegans.